A 313-amino-acid polypeptide reads, in one-letter code: Ras-related GTP-binding protein A (313 aa).

GTP-binding residues include Ser16, Gly17, Gly19, Lys20, Thr21, Ser22, Thr36, Thr42, Gly65, and His127. Residues Gly17, Gly19, Lys20, Thr21, and Ser22 each contribute to the GDP site. Residues His127 and Asp130 each contribute to the GDP site. Lys142 is covalently cross-linked (Glycyl lysine isopeptide (Lys-Gly) (interchain with G-Cter in ubiquitin)). Leu148 and Ile164 together coordinate GDP. A GTP-binding site is contributed by Ile164. Residues Lys220, Lys230, and Lys244 each participate in a glycyl lysine isopeptide (Lys-Gly) (interchain with G-Cter in ubiquitin) cross-link. Phosphoserine is present on Ser309.

The protein belongs to the GTR/RAG GTP-binding protein family. As to quaternary structure, can occur as a homodimer or as a heterodimer with RRAGC or RRAGD in a sequence-independent manner; heterodimerization stabilizes proteins of the heterodimer. The GTP-bound form of RRAGA (in complex with the GDP-bound form of RRAGC or RRAGD) interacts with RPTOR, thereby promoting recruitment of mTORC1 to the lysosomes. The Rag heterodimer interacts with SLC38A9; the probable amino acid sensor. The Rag heterodimer interacts with the Ragulator complex. The GTP-bound form of RRAGA interacts with NOL8. Component of the lysosomal folliculin complex (LFC), composed of FLCN, FNIP1 (or FNIP2), RagA/RRAGA or RagB/RRAGB GDP-bound, RagC/RRAGC or RagD/RRAGD GTP-bound, and Ragulator. Interacts with SH3BP4; the interaction with this negative regulator is most probably direct, preferentially occurs with the inactive GDP-bound form of RRAGA and is negatively regulated by amino acids. Interacts (polyubiquitinated) with TSC2. Interacts with SESN1, SESN2 and SESN3. Interacts with PIP4P1. Interacts with GPR137B. Interacts with WDR83; this interaction regulates the spatiotemporal localization of mTORC1 to the lysosomal surface. In terms of processing, polybiquitinated via 'Lys-63'-linked polyubiquitination by RNF152 in response to amino acid starvation: polyubiquitination of the GDP-bound inactive form by RNF152 promotes RRAGA inactivation and interaction with the GATOR1 complex. This does not affect RRAGA degradation.

Its subcellular location is the cytoplasm. The protein resides in the nucleus. It is found in the lysosome membrane. It carries out the reaction GTP + H2O = GDP + phosphate + H(+). With respect to regulation, the activation of GTP-binding proteins is generally mediated by a guanine exchange factor (GEF), while inactivation through hydrolysis of bound GTP is catalyzed by a GTPase activating protein (GAP). The Ragulator complex functions as a GEF and promotes the active GTP-bound form. The GATOR1 complex functions as a GAP and stimulates RRAGA GTPase activity to turn it into its inactive GDP-bound form, preventing mTORC1 recruitment and activation. Functionally, guanine nucleotide-binding protein that plays a crucial role in the cellular response to amino acid availability through regulation of the mTORC1 signaling cascade. Forms heterodimeric Rag complexes with RagC/RRAGC or RagD/RRAGD and cycles between an inactive GDP-bound and an active GTP-bound form: RagA/RRAGA is in its active form when GTP-bound RagA/RRAGA forms a complex with GDP-bound RagC/RRAGC (or RagD/RRAGD) and in an inactive form when GDP-bound RagA/RRAGA heterodimerizes with GTP-bound RagC/RRAGC (or RagD/RRAGD). In its GTP-bound active form, promotes the recruitment of mTORC1 to the lysosomes and its subsequent activation by the GTPase RHEB. Involved in the RCC1/Ran-GTPase pathway. May play a direct role in a TNF-alpha signaling pathway leading to induction of cell death. In Bos taurus (Bovine), this protein is Ras-related GTP-binding protein A.